We begin with the raw amino-acid sequence, 466 residues long: A-type ATP synthase subunit B 2 (466 aa).

This sequence belongs to the ATPase alpha/beta chains family. As to quaternary structure, has multiple subunits with at least A(3), B(3), C, D, E, F, H, I and proteolipid K(x).

The protein resides in the cell membrane. In terms of biological role, component of the A-type ATP synthase that produces ATP from ADP in the presence of a proton gradient across the membrane. The B chain is a regulatory subunit. This Methanospirillum hungatei JF-1 (strain ATCC 27890 / DSM 864 / NBRC 100397 / JF-1) protein is A-type ATP synthase subunit B 2.